Here is a 224-residue protein sequence, read N- to C-terminus: LRP chaperone MESD (224 aa).

The first 29 residues, 1–29 (MAASRWLRAVLLFLCASDLLLLPPPNAYA), serve as a signal peptide directing secretion. A chaperone domain region spans residues 1 to 155 (MAASRWLRAV…DRAIFMLRDG (155 aa)). Disordered stretches follow at residues 28–49 (YAAD…IRDY) and 178–224 (GQMY…REDL). Residues 156–195 (SYAWEIKDFLVSQDRCAEVTLEGQMYPGKGGGSKEKNKTK) form an escort domain region. Residues 187–224 (GSKEKNKTKPEKAKKKEGDPKPRASKEDNRAGSRREDL) are compositionally biased toward basic and acidic residues. An N-linked (GlcNAc...) asparagine glycan is attached at N192. Residues 221–224 (REDL) carry the Prevents secretion from ER motif.

Belongs to the MESD family. As to quaternary structure, monomer. Interacts with LRP5; the interaction prevents LRP5 from forming aggregates and chaperones LRP6 to the plasma membrane. Interacts with LRP6; the interaction prevents LRP6 from forming aggregates and chaperones LRP6 to the plasma membrane. Interacts with LRP4; the interaction promotes glycosylation of LRP4 and its cell-surface expression. In terms of tissue distribution, expressed in many tissues, but not in skeletal muscles. In the retina expressed in retinal ganglion cells, inner and outer plexiform layers, photoreceptor inner and outer segments and retinal pigment epithelium (at protein level).

The protein localises to the endoplasmic reticulum. Chaperone specifically assisting the folding of beta-propeller/EGF modules within the family of low-density lipoprotein receptors (LDLRs). Acts as a modulator of the Wnt pathway through chaperoning the coreceptors of the canonical Wnt pathway, LRP5 and LRP6, to the plasma membrane. Essential for specification of embryonic polarity and mesoderm induction. Plays an essential role in neuromuscular junction (NMJ) formation by promoting cell-surface expression of LRP4. May regulate phagocytosis of apoptotic retinal pigment epithelium (RPE) cells. This Mus musculus (Mouse) protein is LRP chaperone MESD.